Here is a 168-residue protein sequence, read N- to C-terminus: NADH-quinone oxidoreductase subunit B (168 aa).

[4Fe-4S] cluster is bound by residues Cys49, Cys50, Cys114, and Cys144.

The protein belongs to the complex I 20 kDa subunit family. NDH-1 is composed of 14 different subunits. Subunits NuoB, C, D, E, F, and G constitute the peripheral sector of the complex. The cofactor is [4Fe-4S] cluster.

It localises to the cell membrane. It catalyses the reaction a quinone + NADH + 5 H(+)(in) = a quinol + NAD(+) + 4 H(+)(out). Its function is as follows. NDH-1 shuttles electrons from NADH, via FMN and iron-sulfur (Fe-S) centers, to quinones in the respiratory chain. Couples the redox reaction to proton translocation (for every two electrons transferred, four hydrogen ions are translocated across the cytoplasmic membrane), and thus conserves the redox energy in a proton gradient. This is NADH-quinone oxidoreductase subunit B from Wolbachia pipientis wMel.